A 1342-amino-acid polypeptide reads, in one-letter code: DNA-directed RNA polymerase subunit beta (1342 aa).

It belongs to the RNA polymerase beta chain family. The RNAP catalytic core consists of 2 alpha, 1 beta, 1 beta' and 1 omega subunit. When a sigma factor is associated with the core the holoenzyme is formed, which can initiate transcription.

The catalysed reaction is RNA(n) + a ribonucleoside 5'-triphosphate = RNA(n+1) + diphosphate. Its function is as follows. DNA-dependent RNA polymerase catalyzes the transcription of DNA into RNA using the four ribonucleoside triphosphates as substrates. The chain is DNA-directed RNA polymerase subunit beta from Actinobacillus pleuropneumoniae serotype 3 (strain JL03).